Reading from the N-terminus, the 261-residue chain is Tryptophan synthase alpha chain (261 aa).

Active-site proton acceptor residues include glutamate 47 and aspartate 58.

Belongs to the TrpA family. In terms of assembly, tetramer of two alpha and two beta chains.

The enzyme catalyses (1S,2R)-1-C-(indol-3-yl)glycerol 3-phosphate + L-serine = D-glyceraldehyde 3-phosphate + L-tryptophan + H2O. It functions in the pathway amino-acid biosynthesis; L-tryptophan biosynthesis; L-tryptophan from chorismate: step 5/5. Functionally, the alpha subunit is responsible for the aldol cleavage of indoleglycerol phosphate to indole and glyceraldehyde 3-phosphate. In Neisseria meningitidis serogroup A / serotype 4A (strain DSM 15465 / Z2491), this protein is Tryptophan synthase alpha chain.